Reading from the N-terminus, the 187-residue chain is MNLTNHFLVAMPGMKDPYFQNSVIYLCEHNDEGAMGLMINAPIDVTVGSMLKQVEVDSEQPKPNQASLDKPVLNGGPVAEDRGFILHKPKGSYQSSINMTDQISVTTSKDILMVLGTEDEPMHYLVALGYAGWEPGQLEIELTENSWLTVEADPKVIFNTPISDRWKVAVQMLGINAAQLSADAGHA.

Belongs to the UPF0301 (AlgH) family.

The polypeptide is UPF0301 protein VS_2679 (Vibrio atlanticus (strain LGP32) (Vibrio splendidus (strain Mel32))).